Consider the following 255-residue polypeptide: Tabinhibitin 2 (255 aa).

A signal peptide spans 1–23 (MISILVSRFLLAALVLQYATIDA). A Cell attachment site motif is present at residues 32 to 34 (RGD). One can recognise an SCP domain in the interval 67–211 (LSKINDVRDH…KARALLTCNF (145 aa)).

This sequence belongs to the CRISP family. Expressed in salivary glands.

The protein localises to the secreted. Inhibits platelet aggregation induced by all agonists tested (ADP, arachidonic acid, the thromboxane A2 analog U46619, thrombin, and snake venom snaclecs (TMVA that activates platelet through GPIB, and stejnulxin that specifically acts through GPVI (GP6))). May act by competing with fibrinogen for binding to glycoprotein IIb/IIIa (ITGA2B/ITGB3). This Tabanus yao (Horsefly) protein is Tabinhibitin 2.